The primary structure comprises 828 residues: Periplasmic nitrate reductase (828 aa).

Residues 1–31 (MKLSRRSFMKANAVAAAAAAAGLSVPGVARA) constitute a signal peptide (tat-type signal). The 4Fe-4S Mo/W bis-MGD-type domain occupies 39–95 (IKWDKAPCRFCGTGCGVLVGTQQGRVVACQGDPDAPVNRGLNCIKGYFLPKIMYGKD). Positions 46, 49, 53, and 81 each coordinate [4Fe-4S] cluster. Mo-bis(molybdopterin guanine dinucleotide)-binding positions include lysine 83, glutamine 150, asparagine 175, cysteine 179, 212–219 (WGANMAEM), 243–247 (STYQH), 262–264 (QSD), methionine 372, glutamine 376, asparagine 482, 508–509 (SD), lysine 531, aspartate 558, and 718–727 (TGRVLEHWHT). Phenylalanine 794 is a substrate binding site. 2 residues coordinate Mo-bis(molybdopterin guanine dinucleotide): asparagine 802 and lysine 819.

It belongs to the prokaryotic molybdopterin-containing oxidoreductase family. NasA/NapA/NarB subfamily. Component of the periplasmic nitrate reductase NapAB complex composed of NapA and NapB. [4Fe-4S] cluster serves as cofactor. It depends on Mo-bis(molybdopterin guanine dinucleotide) as a cofactor. In terms of processing, predicted to be exported by the Tat system. The position of the signal peptide cleavage has not been experimentally proven.

The protein resides in the periplasm. The catalysed reaction is 2 Fe(II)-[cytochrome] + nitrate + 2 H(+) = 2 Fe(III)-[cytochrome] + nitrite + H2O. In terms of biological role, catalytic subunit of the periplasmic nitrate reductase complex NapAB. Receives electrons from NapB and catalyzes the reduction of nitrate to nitrite. The chain is Periplasmic nitrate reductase from Escherichia coli O8 (strain IAI1).